The primary structure comprises 309 residues: Porphobilinogen deaminase (309 aa).

Cys242 carries the post-translational modification S-(dipyrrolylmethanemethyl)cysteine.

It belongs to the HMBS family. Monomer. Requires dipyrromethane as cofactor.

It catalyses the reaction 4 porphobilinogen + H2O = hydroxymethylbilane + 4 NH4(+). The protein operates within porphyrin-containing compound metabolism; protoporphyrin-IX biosynthesis; coproporphyrinogen-III from 5-aminolevulinate: step 2/4. Its function is as follows. Tetrapolymerization of the monopyrrole PBG into the hydroxymethylbilane pre-uroporphyrinogen in several discrete steps. In Syntrophobacter fumaroxidans (strain DSM 10017 / MPOB), this protein is Porphobilinogen deaminase.